The following is a 403-amino-acid chain: Eukaryotic initiation factor 4A (403 aa).

Residues 1-20 (MDDRNEIPQDGPASMEPEGV) form a disordered region. Positions 30 to 58 (DNFDDMNLREELLRGIYGYGFEKPSAIQQ) match the Q motif motif. A Helicase ATP-binding domain is found at 61 to 231 (IIPCVRGRDV…RCFMRDPVSI (171 aa)). 74–81 (AQSGTGKT) contacts ATP. The short motif at 179–182 (DEAD) is the DEAD box element. The Helicase C-terminal domain maps to 242-403 (GIKQFYVNVK…EMPANIADLI (162 aa)).

This sequence belongs to the DEAD box helicase family. eIF4A subfamily. In terms of assembly, eIF4F is a multi-subunit complex, the composition of which varies with external and internal environmental conditions. It is composed of at least eIF4A, eIF4E1 and eIF4G1. Interacts with tud and vas. Interacts (via multiple contacts) with bam; the interaction is direct.

The protein localises to the cytoplasm. It is found in the cytoplasmic ribonucleoprotein granule. The catalysed reaction is ATP + H2O = ADP + phosphate + H(+). Its function is as follows. ATP-dependent RNA helicase which is a subunit of the eIF4F complex involved in cap recognition and is required for mRNA binding to ribosome. In the current model of translation initiation, eIF4A unwinds RNA secondary structures in the 5'-UTR of mRNAs which is necessary to allow efficient binding of the small ribosomal subunit, and subsequent scanning for the initiator codon. As a result, promotes cell proliferation and growth. Binds and antagonises the bam-bgcn complex; probably prevents bam mediated translational repression of shg/E-cadherin. Involved in germ cell formation. Involved in germline stem cell maintenance and proliferation; prevents differentiation. This chain is Eukaryotic initiation factor 4A, found in Drosophila melanogaster (Fruit fly).